A 241-amino-acid chain; its full sequence is Prolactin-8A8 (241 aa).

The signal sequence occupies residues 1–30 (MELQFRQPHFSDALLLLLLSNLLLWEKASS). Cystine bridges form between cysteine 34/cysteine 41, cysteine 101/cysteine 217, and cysteine 234/cysteine 241. An N-linked (GlcNAc...) asparagine glycan is attached at asparagine 213.

It belongs to the somatotropin/prolactin family. Expressed specifically in the placenta. Predominantly expressed in spongiotrophoblast cells.

It is found in the secreted. This Mus musculus (Mouse) protein is Prolactin-8A8 (Prl8a8).